A 92-amino-acid polypeptide reads, in one-letter code: Protease inhibitors (92 aa).

The signal sequence occupies residues 1–19; sequence MKFALALCAAVLLVVLVQA. Pacifastin domains follow at residues 20 to 54 and 57 to 92; these read EEKC…CQPA and EISC…CPNQ. Intrachain disulfides connect Cys23/Cys38, Cys33/Cys51, Cys36/Cys46, Cys60/Cys75, Cys70/Cys89, and Cys73/Cys84. O-linked (Fuc) threonine glycosylation is present at Thr65.

This sequence belongs to the protease inhibitor I19 family. As to expression, brain and fat body.

Its subcellular location is the secreted. In terms of biological role, both LCMI I and II are inhibitors of chymotrypsin and elastase (in vitro). They both inhibit the prophenol oxidase activation cascade. This Locusta migratoria (Migratory locust) protein is Protease inhibitors.